Here is a 76-residue protein sequence, read N- to C-terminus: RNA-binding protein KhpA (76 aa).

In terms of domain architecture, KH spans 30–76 (GEVLEVRVNPEDLGRVIGRSGRTAKALRTLVTALADGRRVRVDVVDD).

It belongs to the KhpA RNA-binding protein family.

It is found in the cytoplasm. In terms of biological role, a probable RNA-binding protein. The protein is RNA-binding protein KhpA of Leifsonia xyli subsp. xyli (strain CTCB07).